The primary structure comprises 811 residues: Exocyst complex component 6B (811 aa).

Positions 50–119 (MEKLETRIRN…LVIAMEELKQ (70 aa)) form a coiled coil. The segment at 260 to 280 (STSPKSEQDSGILDVEDEEDD) is disordered.

This sequence belongs to the SEC15 family. As to quaternary structure, the exocyst complex is composed of SEC3, SEC5, SEC6, SEC8, SEC10, SEC15, EXO70 and EXO84.

Its function is as follows. Component of the exocyst complex involved in the docking of exocytic vesicles with fusion sites on the plasma membrane. This chain is Exocyst complex component 6B (EXOC6B), found in Homo sapiens (Human).